The primary structure comprises 443 residues: Tol-Pal system protein TolB (443 aa).

An N-terminal signal peptide occupies residues 1–24 (MSFQIRVFTAILAVLSLFTAPVLA). A disordered region spans residues 424-443 (LRPVRTPEGGSDPSWSPLQR).

The protein belongs to the TolB family. As to quaternary structure, the Tol-Pal system is composed of five core proteins: the inner membrane proteins TolA, TolQ and TolR, the periplasmic protein TolB and the outer membrane protein Pal. They form a network linking the inner and outer membranes and the peptidoglycan layer.

The protein localises to the periplasm. Part of the Tol-Pal system, which plays a role in outer membrane invagination during cell division and is important for maintaining outer membrane integrity. The chain is Tol-Pal system protein TolB from Roseobacter denitrificans (strain ATCC 33942 / OCh 114) (Erythrobacter sp. (strain OCh 114)).